Consider the following 873-residue polypeptide: Envelope glycoprotein B (873 aa).

The signal sequence occupies residues 1-21; it reads MASLKMLICVCVAILIPSTLS. Topologically, residues 22 to 740 are virion surface; sequence QDSHGIAGII…SGIASFLSNP (719 aa). Disulfide bonds link Cys67/Cys525, Cys84/Cys481, Cys157/Cys219, Cys311/Cys359, and Cys548/Cys598. N-linked (GlcNAc...) asparagine; by host glycans are attached at residues Asn92 and Asn111. The interval 124-130 is involved in fusion and/or binding to host membrane; that stretch reads TWALFSR. Asn201 carries an N-linked (GlcNAc...) asparagine; by host glycan. Residues 206 to 213 form an involved in fusion and/or binding to host membrane region; sequence HQTLGYRT. 2 N-linked (GlcNAc...) asparagine; by host glycosylation sites follow: Asn252 and Asn350. The segment at 418–447 is disordered; the sequence is QNHLPRGRERRQAAGRRTASLQSGPQGDRI. 3 N-linked (GlcNAc...) asparagine; by host glycosylation sites follow: Asn569, Asn625, and Asn639. 2 hydrophobic membrane proximal region regions span residues 684–738 and 715–734; these read IDTV…SFLS and LGTV…SGIA. The chain crosses the membrane as a helical span at residues 741 to 761; it reads FAALGIGIAVVVSIILGLLAF. Residues 762 to 873 lie on the Intravirion side of the membrane; it reads KYVMNLKSNP…PSWAEESEDE (112 aa). Residues 781–807 are disordered; the sequence is PPAGTPPRPSRRYYKDEEEVEEDSDED. Over residues 796–807 the composition is skewed to acidic residues; that stretch reads DEEEVEEDSDED. An Internalization motif motif is present at residues 858–861; it reads YPLL.

It belongs to the herpesviridae glycoprotein B family. As to quaternary structure, homotrimer; disulfide-linked. Binds to heparan sulfate proteoglycans. Interacts with gH/gL heterodimer. In terms of processing, a proteolytic cleavage by host furin generates two subunits that remain linked by disulfide bonds.

It localises to the virion membrane. The protein resides in the host cell membrane. It is found in the host endosome membrane. The protein localises to the host Golgi apparatus membrane. Functionally, envelope glycoprotein that forms spikes at the surface of virion envelope. Essential for the initial attachment to heparan sulfate moieties of the host cell surface proteoglycans. Involved in fusion of viral and cellular membranes leading to virus entry into the host cell. Following initial binding to its host receptors, membrane fusion is mediated by the fusion machinery composed at least of gB and the heterodimer gH/gL. May be involved in the fusion between the virion envelope and the outer nuclear membrane during virion egress. This Infectious laryngotracheitis virus (strain 632) (ILTV) protein is Envelope glycoprotein B.